The sequence spans 426 residues: Glutamate-1-semialdehyde 2,1-aminomutase (426 aa).

K265 bears the N6-(pyridoxal phosphate)lysine mark.

It belongs to the class-III pyridoxal-phosphate-dependent aminotransferase family. HemL subfamily. In terms of assembly, homodimer. Pyridoxal 5'-phosphate serves as cofactor.

The protein resides in the cytoplasm. It carries out the reaction (S)-4-amino-5-oxopentanoate = 5-aminolevulinate. It functions in the pathway porphyrin-containing compound metabolism; protoporphyrin-IX biosynthesis; 5-aminolevulinate from L-glutamyl-tRNA(Glu): step 2/2. In Escherichia fergusonii (strain ATCC 35469 / DSM 13698 / CCUG 18766 / IAM 14443 / JCM 21226 / LMG 7866 / NBRC 102419 / NCTC 12128 / CDC 0568-73), this protein is Glutamate-1-semialdehyde 2,1-aminomutase.